The sequence spans 200 residues: Pyrrolidone-carboxylate peptidase (200 aa).

Catalysis depends on residues Glu78, Cys141, and His165.

Belongs to the peptidase C15 family. As to quaternary structure, homotetramer.

It localises to the cytoplasm. It carries out the reaction Release of an N-terminal pyroglutamyl group from a polypeptide, the second amino acid generally not being Pro.. In terms of biological role, removes 5-oxoproline from various penultimate amino acid residues except L-proline. In Lactobacillus acidophilus (strain ATCC 700396 / NCK56 / N2 / NCFM), this protein is Pyrrolidone-carboxylate peptidase.